Reading from the N-terminus, the 107-residue chain is Inner membrane protein YgbE (107 aa).

Over 1–20 the chain is Cytoplasmic; the sequence is MRNSHNITLTNNDSLTEDEE. A helical membrane pass occupies residues 21 to 43; sequence TTWSLPGAVVGFISWLFALAMPM. The Periplasmic portion of the chain corresponds to 44 to 52; it reads LIYGSNTLF. A helical transmembrane segment spans residues 53-75; the sequence is FFIYTWPFFLALMPVAVVVGIAL. Residues 76 to 86 lie on the Cytoplasmic side of the membrane; sequence HSLMDGKLRYS. The helical transmembrane segment at 87–106 threads the bilayer; that stretch reads IVFTLVTVGIMFGALFMWLL. Position 107 (glycine 107) is a topological domain, periplasmic.

The protein localises to the cell inner membrane. The chain is Inner membrane protein YgbE (ygbE) from Escherichia coli (strain K12).